We begin with the raw amino-acid sequence, 117 residues long: Large ribosomal subunit protein bL20c (117 aa).

Belongs to the bacterial ribosomal protein bL20 family.

It is found in the plastid. The protein resides in the chloroplast. Its function is as follows. Binds directly to 23S ribosomal RNA and is necessary for the in vitro assembly process of the 50S ribosomal subunit. It is not involved in the protein synthesizing functions of that subunit. The polypeptide is Large ribosomal subunit protein bL20c (Populus alba (White poplar)).